The following is a 276-amino-acid chain: NH(3)-dependent NAD(+) synthetase (276 aa).

47 to 54 (GISGGQDS) lines the ATP pocket. Residue Asp53 participates in Mg(2+) binding. Residue Arg141 coordinates deamido-NAD(+). Thr161 serves as a coordination point for ATP. Residue Glu166 coordinates Mg(2+). Positions 174 and 181 each coordinate deamido-NAD(+). ATP contacts are provided by Lys190 and Thr212. A deamido-NAD(+)-binding site is contributed by 261-262 (HK).

Belongs to the NAD synthetase family. In terms of assembly, homodimer.

It carries out the reaction deamido-NAD(+) + NH4(+) + ATP = AMP + diphosphate + NAD(+) + H(+). It functions in the pathway cofactor biosynthesis; NAD(+) biosynthesis; NAD(+) from deamido-NAD(+) (ammonia route): step 1/1. Catalyzes the ATP-dependent amidation of deamido-NAD to form NAD. Uses ammonia as a nitrogen source. The sequence is that of NH(3)-dependent NAD(+) synthetase from Levilactobacillus brevis (strain ATCC 367 / BCRC 12310 / CIP 105137 / JCM 1170 / LMG 11437 / NCIMB 947 / NCTC 947) (Lactobacillus brevis).